Consider the following 276-residue polypeptide: NH(3)-dependent NAD(+) synthetase (276 aa).

ATP is bound at residue 43–50 (GISGGVDS). D49 provides a ligand contact to Mg(2+). Deamido-NAD(+) is bound at residue R146. Residue T166 coordinates ATP. E171 serves as a coordination point for Mg(2+). Deamido-NAD(+) is bound by residues K179 and D186. Residues K195 and T217 each contribute to the ATP site. Position 266–267 (266–267 (HK)) interacts with deamido-NAD(+).

The protein belongs to the NAD synthetase family. As to quaternary structure, homodimer.

The catalysed reaction is deamido-NAD(+) + NH4(+) + ATP = AMP + diphosphate + NAD(+) + H(+). It participates in cofactor biosynthesis; NAD(+) biosynthesis; NAD(+) from deamido-NAD(+) (ammonia route): step 1/1. Functionally, catalyzes the ATP-dependent amidation of deamido-NAD to form NAD. Uses ammonia as a nitrogen source. The sequence is that of NH(3)-dependent NAD(+) synthetase from Psychromonas ingrahamii (strain DSM 17664 / CCUG 51855 / 37).